The following is a 128-amino-acid chain: Large ribosomal subunit protein mL51 (128 aa).

The N-terminal 31 residues, 1 to 31 (MAGNLLSGAGRRLWDWVPLACRSFSLGVPRL), are a transit peptide targeting the mitochondrion.

Belongs to the mitochondrion-specific ribosomal protein mL51 family. In terms of assembly, component of the mitochondrial large ribosomal subunit (mt-LSU). Mature mammalian 55S mitochondrial ribosomes consist of a small (28S) and a large (39S) subunit. The 28S small subunit contains a 12S ribosomal RNA (12S mt-rRNA) and 30 different proteins. The 39S large subunit contains a 16S rRNA (16S mt-rRNA), a copy of mitochondrial valine transfer RNA (mt-tRNA(Val)), which plays an integral structural role, and 52 different proteins. Interacts with OXA1L.

Its subcellular location is the mitochondrion. The chain is Large ribosomal subunit protein mL51 (MRPL51) from Homo sapiens (Human).